We begin with the raw amino-acid sequence, 122 residues long: Phosphoribosyl-ATP pyrophosphatase (122 aa).

This sequence belongs to the PRA-PH family.

The protein localises to the cytoplasm. The catalysed reaction is 1-(5-phospho-beta-D-ribosyl)-ATP + H2O = 1-(5-phospho-beta-D-ribosyl)-5'-AMP + diphosphate + H(+). Its pathway is amino-acid biosynthesis; L-histidine biosynthesis; L-histidine from 5-phospho-alpha-D-ribose 1-diphosphate: step 2/9. This is Phosphoribosyl-ATP pyrophosphatase from Burkholderia mallei (strain NCTC 10247).